A 200-amino-acid polypeptide reads, in one-letter code: Superoxide dismutase [Fe] (200 aa).

Positions 28, 80, 162, and 166 each coordinate Fe cation.

It belongs to the iron/manganese superoxide dismutase family. As to quaternary structure, homodimer. The cofactor is Fe cation.

It carries out the reaction 2 superoxide + 2 H(+) = H2O2 + O2. In terms of biological role, destroys superoxide anion radicals which are normally produced within the cells and which are toxic to biological systems. This is Superoxide dismutase [Fe] (sodB) from Nostoc sp. (strain PCC 7120 / SAG 25.82 / UTEX 2576).